The sequence spans 572 residues: Proline--tRNA ligase (572 aa).

Belongs to the class-II aminoacyl-tRNA synthetase family. ProS type 1 subfamily. In terms of assembly, homodimer.

It is found in the cytoplasm. It catalyses the reaction tRNA(Pro) + L-proline + ATP = L-prolyl-tRNA(Pro) + AMP + diphosphate. Functionally, catalyzes the attachment of proline to tRNA(Pro) in a two-step reaction: proline is first activated by ATP to form Pro-AMP and then transferred to the acceptor end of tRNA(Pro). As ProRS can inadvertently accommodate and process non-cognate amino acids such as alanine and cysteine, to avoid such errors it has two additional distinct editing activities against alanine. One activity is designated as 'pretransfer' editing and involves the tRNA(Pro)-independent hydrolysis of activated Ala-AMP. The other activity is designated 'posttransfer' editing and involves deacylation of mischarged Ala-tRNA(Pro). The misacylated Cys-tRNA(Pro) is not edited by ProRS. In Escherichia coli O9:H4 (strain HS), this protein is Proline--tRNA ligase.